The primary structure comprises 389 residues: D-alanyl-D-alanine carboxypeptidase DacF (389 aa).

The N-terminal stretch at 1 to 23 is a signal peptide; it reads MKRLLSTLLIGIMLLTFAPSAFA. Ser-64 (acyl-ester intermediate) is an active-site residue. The active-site Proton acceptor is the Lys-67. Residue Ser-124 is part of the active site. Position 230 (Lys-230) interacts with substrate.

It belongs to the peptidase S11 family.

Its subcellular location is the secreted. It catalyses the reaction Preferential cleavage: (Ac)2-L-Lys-D-Ala-|-D-Ala. Also transpeptidation of peptidyl-alanyl moieties that are N-acyl substituents of D-alanine.. Its pathway is cell wall biogenesis; peptidoglycan biosynthesis. Its function is as follows. Removes C-terminal D-alanyl residues from sugar-peptide cell wall precursors. This Bacillus subtilis (strain 168) protein is D-alanyl-D-alanine carboxypeptidase DacF (dacF).